The chain runs to 162 residues: CASP-like protein 1C2 (162 aa).

Residues 1–6 (MMKPKR) lie on the Cytoplasmic side of the membrane. The chain crosses the membrane as a helical span at residues 7-27 (LLSLLLRLIAVGATLAAVIIM). Over 28 to 49 (ATSHEKGTFFAVSYEAKYTDTP) the chain is Extracellular. Residues 50–70 (AFKYFVIANAIVTVYGFLVLF) traverse the membrane as a helical segment. Residues 71 to 79 (HPPGSPLWR) are Cytoplasmic-facing. Residues 80 to 100 (LVLALDLVFTMLLISSISAAL) traverse the membrane as a helical segment. Over 101 to 130 (AVAQVGKNGNSRAGWLPVCGQVTKYCNQVT) the chain is Extracellular. A helical transmembrane segment spans residues 131 to 151 (GALVAGLIALITYIILLLHSI). Residues 152–162 (YTFLNPLLEKA) are Cytoplasmic-facing.

The protein belongs to the Casparian strip membrane proteins (CASP) family. In terms of assembly, homodimer and heterodimers.

Its subcellular location is the cell membrane. This is CASP-like protein 1C2 from Populus trichocarpa (Western balsam poplar).